The sequence spans 124 residues: Small ribosomal subunit protein bS6 (124 aa).

Belongs to the bacterial ribosomal protein bS6 family.

Functionally, binds together with bS18 to 16S ribosomal RNA. This is Small ribosomal subunit protein bS6 from Actinobacillus pleuropneumoniae serotype 5b (strain L20).